The chain runs to 715 residues: ATP-dependent zinc metalloprotease YME1L1 (715 aa).

Residues 1–237 (MFSLSSTVQP…TNDSLRRTRL (237 aa)) are Mitochondrial matrix-facing. A disordered region spans residues 34 to 54 (NTPVSQKQHRDTVPEHEAPSS). The span at 41–52 (QHRDTVPEHEAP) shows a compositional bias: basic and acidic residues. A helical transmembrane segment spans residues 238–258 (ILFVLLLFGIYGLLKNPFLSV). Topologically, residues 259–715 (RFRTTTGLDS…VLEGKKLEVR (457 aa)) are mitochondrial intermembrane. ATP-binding residues include Val-283, Thr-325, Gly-326, Lys-327, Thr-328, and Leu-329. His-541 is a binding site for Zn(2+). Glu-542 is a catalytic residue. Zn(2+) is bound by residues His-545 and Asp-619.

The protein in the N-terminal section; belongs to the AAA ATPase family. This sequence in the C-terminal section; belongs to the peptidase M41 family. As to quaternary structure, homohexamer; may also form heterohexamers. Exists in several complexes of 600-1100 kDa. Interacts with AFG1L. Zn(2+) is required as a cofactor. In terms of processing, proteolytically processed by mitochondrial processing peptidase (MPP) to generate the mature form. Degraded in an OMA1-dependent manner in response to oxidative stress. As to expression, detected in heart and skeletal muscle (at protein level).

Its subcellular location is the mitochondrion inner membrane. The protein localises to the mitochondrion. The catalysed reaction is ATP + H2O = ADP + phosphate + H(+). Its function is as follows. ATP-dependent metalloprotease that catalyzes the degradation of folded and unfolded proteins with a suitable degron sequence in the mitochondrial intermembrane region. Plays an important role in regulating mitochondrial morphology and function by cleaving OPA1 at position S2, giving rise to a form of OPA1 that promotes maintenance of normal mitochondrial structure and mitochondrial protein metabolism. Ensures cell proliferation, maintains normal cristae morphology and complex I respiration activity, promotes antiapoptotic activity and protects mitochondria from the accumulation of oxidatively damaged membrane proteins. Required to control the accumulation of nonassembled respiratory chain subunits (NDUFB6, OX4 and ND1). Involved in the mitochondrial adaptation in response to various signals, such as stress or developmental cues, by mediating degradation of mitochondrial proteins to rewire the mitochondrial proteome. Catalyzes degradation of mitochondrial proteins, such as translocases, lipid transfer proteins and metabolic enzymes in response to nutrient starvation in order to limit mitochondrial biogenesis: mechanistically, YME1L is activated by decreased phosphatidylethanolamine levels caused by LPIN1 activity in response to mTORC1 inhibition. Acts as a regulator of adult neural stem cell self-renewal by promoting mitochondrial proteome rewiring, preserving neural stem and progenitor cells self-renewal. Required for normal, constitutive degradation of PRELID1. Catalyzes the degradation of OMA1 in response to membrane depolarization. Mediates degradation of TIMM17A downstream of the integrated stress response (ISR). Catalyzes degradation of MICU1 when MICU1 is not assembled via an interchain disulfide. This Mus musculus (Mouse) protein is ATP-dependent zinc metalloprotease YME1L1 (Yme1l1).